Here is a 365-residue protein sequence, read N- to C-terminus: Alanine racemase (365 aa).

The active-site Proton acceptor; specific for D-alanine is the lysine 32. Lysine 32 is subject to N6-(pyridoxal phosphate)lysine. Arginine 128 contributes to the substrate binding site. The active-site Proton acceptor; specific for L-alanine is the tyrosine 257. Methionine 305 is a substrate binding site.

Belongs to the alanine racemase family. It depends on pyridoxal 5'-phosphate as a cofactor.

It carries out the reaction L-alanine = D-alanine. It functions in the pathway amino-acid biosynthesis; D-alanine biosynthesis; D-alanine from L-alanine: step 1/1. In terms of biological role, catalyzes the interconversion of L-alanine and D-alanine. May also act on other amino acids. In Francisella tularensis subsp. tularensis (strain WY96-3418), this protein is Alanine racemase (alr).